Consider the following 103-residue polypeptide: Histone H4.2 (103 aa).

Residues 1 to 14 (MSGRGKGGKGLGKG) show a composition bias toward gly residues. The interval 1–20 (MSGRGKGGKGLGKGGAKRHR) is disordered. The residue at position 6 (lysine 6) is an N6-acetyl-N6-methyllysine; alternate. N6-methyllysine; alternate is present on residues lysine 6, lysine 9, and lysine 13. Lysine 13 bears the N6-acetyl-N6-methyllysine; alternate mark. A DNA-binding region spans residues 17 to 21 (KRHRK). An N6-glutaryllysine modification is found at lysine 92.

This sequence belongs to the histone H4 family. In terms of assembly, the nucleosome is a histone octamer containing two molecules each of H2A, H2B, H3 and H4 assembled in one H3-H4 heterotetramer and two H2A-H2B heterodimers. The octamer wraps approximately 147 bp of DNA. Glutarylation at Lys-92 (H4K91glu) destabilizes nucleosomes by promoting dissociation of the H2A-H2B dimers from nucleosomes.

Its subcellular location is the nucleus. The protein resides in the chromosome. Its function is as follows. Core component of nucleosome. Nucleosomes wrap and compact DNA into chromatin, limiting DNA accessibility to the cellular machineries which require DNA as a template. Histones thereby play a central role in transcription regulation, DNA repair, DNA replication and chromosomal stability. DNA accessibility is regulated via a complex set of post-translational modifications of histones, also called histone code, and nucleosome remodeling. This is Histone H4.2 (hhfB) from Emericella nidulans (strain FGSC A4 / ATCC 38163 / CBS 112.46 / NRRL 194 / M139) (Aspergillus nidulans).